The chain runs to 335 residues: Ficolin-1 (335 aa).

The signal sequence occupies residues 1–17 (MWWPMLWAFPVLLCLCS). The interval 47 to 114 (SCPSFPGPPG…TASPLGQKEL (68 aa)) is disordered. The 39-residue stretch at 50 to 88 (SFPGPPGPKGEPGSPAGRGERGLQGSPGKMGPPGSKGEP) folds into the Collagen-like domain. The segment covering 75–88 (SPGKMGPPGSKGEP) has biased composition (low complexity). A Fibrinogen C-terminal domain is found at 117–335 (ALCRRGPRSC…KVAEMKIRAS (219 aa)). Disulfide bonds link Cys-119–Cys-147 and Cys-126–Cys-154. The a domain; contributes to trimerization stretch occupies residues 123 to 162 (PRSCKDLLTRGIFLTGWYTIYLPDCRPLTVLCDMDVDGGG). A b domain; contributes to trimerization region spans residues 163 to 251 (WTVFQRRVDG…LTLGQFLEGT (89 aa)). Residue Asp-270 participates in Ca(2+) binding. An N-linked (GlcNAc...) asparagine glycan is attached at Asn-271. Asp-272 contacts Ca(2+). Cys-279 and Cys-292 are disulfide-bonded. Position 291–293 (291–293 (DCH)) interacts with a carbohydrate. The p domain stretch occupies residues 326-335 (KVAEMKIRAS).

It belongs to the ficolin lectin family. As to quaternary structure, homotrimer. Interacts with elastin/ELN. Interacts (via Fibrinogen C-terminal domain) with FFAR2. Interacts with CRP; may regulate monocyte activation by FCN1.

Its subcellular location is the secreted. The protein localises to the cell membrane. In terms of biological role, extracellular lectin functioning as a pattern-recognition receptor in innate immunity. Binds the sugar moieties of pathogen-associated molecular patterns (PAMPs) displayed on microbes and activates the lectin pathway of the complement system. May also activate monocytes through a G protein-coupled receptor, FFAR2, inducing the secretion of interleukin-8/IL-8. Binds preferentially to 9-O-acetylated 2-6-linked sialic acid derivatives and to various glycans containing sialic acid engaged in a 2-3 linkage. The protein is Ficolin-1 (Fcn1) of Rattus norvegicus (Rat).